The following is a 244-amino-acid chain: tRNA pseudouridine synthase A (244 aa).

Asp52 acts as the Nucleophile in catalysis. A substrate-binding site is contributed by Tyr110.

It belongs to the tRNA pseudouridine synthase TruA family. In terms of assembly, homodimer.

The enzyme catalyses uridine(38/39/40) in tRNA = pseudouridine(38/39/40) in tRNA. Its function is as follows. Formation of pseudouridine at positions 38, 39 and 40 in the anticodon stem and loop of transfer RNAs. This chain is tRNA pseudouridine synthase A, found in Geobacter sulfurreducens (strain ATCC 51573 / DSM 12127 / PCA).